Here is a 69-residue protein sequence, read N- to C-terminus: Conotoxin Lp3.1 (69 aa).

The first 20 residues, 1–20 (MLKMGVLLFIFLVLFPLTTL), serve as a signal peptide directing secretion. The propeptide occupies 21 to 54 (ELDTDRPVERHAAIKQDLKPQERRGIRLHAPRDE). Disulfide bonds link Cys55–Cys67, Cys56–Cys65, and Cys61–Cys68.

It belongs to the conotoxin M superfamily. Expressed by the venom duct.

Its subcellular location is the secreted. This is Conotoxin Lp3.1 from Conus leopardus (Leopard cone).